We begin with the raw amino-acid sequence, 552 residues long: Urocanate hydratase (552 aa).

Residues 49-50 (GG), glutamine 127, 173-175 (GMG), glutamate 193, arginine 198, 239-240 (NA), 260-264 (QTSAH), 270-271 (YV), and tyrosine 319 contribute to the NAD(+) site. Cysteine 407 is a catalytic residue. Glycine 489 is an NAD(+) binding site.

This sequence belongs to the urocanase family. In terms of assembly, composed of at least two subunits. NAD(+) serves as cofactor.

The protein localises to the cytoplasm. The enzyme catalyses 4-imidazolone-5-propanoate = trans-urocanate + H2O. It participates in amino-acid degradation; L-histidine degradation into L-glutamate; N-formimidoyl-L-glutamate from L-histidine: step 2/3. Its function is as follows. Catalyzes the conversion of urocanate to 4-imidazolone-5-propionate. This is Urocanate hydratase from Bacillus subtilis (strain 168).